A 182-amino-acid polypeptide reads, in one-letter code: MTFEQLIPLIIMAFALGMDAFSVSLGMGMMTLKIRQILYIGVTIGIFHIIMPFIGMVLGRFLSEQYGDIAHFAGAILLIGLGFYIVYSSILENEETRTAPIGISLFVFAFGVSIDSFSVGLSLGIYGAQTVITILLFGFISMLLAWTGLFIGRHAKGMLGTYGEIVGGIILVGFGLYLLFPI.

A run of 6 helical transmembrane segments spans residues 6–26 (LIPL…VSLG), 37–57 (ILYI…IGMV), 71–91 (HFAG…SSIL), 101–121 (IGIS…SVGL), 131–151 (VITI…GLFI), and 162–182 (YGEI…LFPI).

This sequence belongs to the MntP (TC 9.B.29) family.

Its subcellular location is the cell membrane. In terms of biological role, probably functions as a manganese efflux pump. The protein is Putative manganese efflux pump MntP of Bacillus cereus (strain AH187).